Consider the following 49-residue polypeptide: Zinc-containing ferredoxin (49 aa).

The interval 1–36 (GIDPNYRTSRQVVGEHQGHKVYGPVDPPKVLGIHGT) is N-terminal extension. Zn(2+) contacts are provided by His16 and His19. Lys29 is modified (N6-methyllysine). Position 34 (His34) interacts with Zn(2+). A ferredoxin region spans residues 37–49 (IVXVDFDLCIADG). Residue Cys45 participates in [3Fe-4S] cluster binding.

[3Fe-4S] cluster is required as a cofactor. [4Fe-4S] cluster serves as cofactor. The cofactor is Zn(2+).

In terms of biological role, ferredoxins are iron-sulfur proteins that transfer electrons in a wide variety of metabolic reactions. This chain is Zinc-containing ferredoxin (zfx), found in Acidianus infernus.